Here is a 375-residue protein sequence, read N- to C-terminus: Alpha-2,8-sialyltransferase 8B (375 aa).

The Cytoplasmic segment spans residues 1 to 6 (MQLQFR). The chain crosses the membrane as a helical; Signal-anchor for type II membrane protein span at residues 7-23 (SWMLAALTLLVVFLIFA). The Lumenal segment spans residues 24 to 375 (DISEIEEEIG…LTVGQCDGAT (352 aa)). N-linked (GlcNAc...) asparagine glycosylation is found at Asn-60, Asn-72, Asn-89, and Asn-134. 2 disulfide bridges follow: Cys-157–Cys-307 and Cys-171–Cys-371. 2 residues coordinate CMP-N-acetyl-beta-neuraminate: Asn-162 and Asn-185. N-linked (GlcNAc...) asparagine glycosylation is found at Asn-219 and Asn-234. CMP-N-acetyl-beta-neuraminate is bound by residues Thr-294, Thr-295, Gly-296, Trp-316, Tyr-329, and His-330. His-346 acts as the Proton donor/acceptor in catalysis.

Belongs to the glycosyltransferase 29 family. Post-translationally, autopolysialylated. Autopolysialylation is not a prerequisite for the polysialylation acitity, but enhances the polysialylation acitity. Highly expressed in fetal brain, kidney and heart and to a much lesser extent in adult heart and thymus.

It localises to the golgi apparatus membrane. The protein localises to the secreted. The protein resides in the cell membrane. The catalysed reaction is [N-acetyl-alpha-D-neuraminosyl-(2-&gt;8)](n) + CMP-N-acetyl-beta-neuraminate = [N-acetyl-alpha-D-neuraminosyl-(2-&gt;8)](n+1) + CMP + H(+). It functions in the pathway protein modification; protein glycosylation. Catalyzes the transfer of a sialic acid from a CMP-linked sialic acid donor onto a terminal alpha-2,3-, alpha-2,6-, or alpha-2,8-linked sialic acid of an N-linked glycan acceptor through alpha-2,8-linkages. Therefore, participates in polysialic acid synthesis on various sialylated N-acetyllactosaminyl oligosaccharides (alpha-2,3-, alpha-2,6-, or alpha-2,8-linked sialic acid), including NCAM1, NCAM1 N-glycans, FETUB N-glycans, and to a lesser extent sialylparagloboside (SPG) and AHSG, which does not require the initial addition of an alpha 2,8-sialic acid. However, does not exhibit sialic acid-polymerase activity. Catalyzes polysialic acid synthesis in the hippocampal on NCAM1 and supports neurite outgrowth. ST8SIA2-mediated polysialylation influences on oligodendrocyte differentiation and may promote the integrity of myelin and axons. This is Alpha-2,8-sialyltransferase 8B from Homo sapiens (Human).